A 393-amino-acid polypeptide reads, in one-letter code: Isocitrate dehydrogenase [NADP] (393 aa).

Residues Ser-102, Asn-104, Arg-108, Arg-118, and Arg-142 each contribute to the D-threo-isocitrate site. Asp-283 contributes to the Mg(2+) binding site.

Belongs to the isocitrate and isopropylmalate dehydrogenases family. As to quaternary structure, homodimer. The cofactor is Mg(2+). Mn(2+) serves as cofactor.

The enzyme catalyses D-threo-isocitrate + NADP(+) = 2-oxoglutarate + CO2 + NADPH. Functionally, catalyzes the oxidative decarboxylation of isocitrate to 2-oxoglutarate and carbon dioxide with the concomitant reduction of NADP(+). This chain is Isocitrate dehydrogenase [NADP] (icd), found in Streptococcus mutans serotype c (strain ATCC 700610 / UA159).